A 280-amino-acid chain; its full sequence is 4-diphosphocytidyl-2-C-methyl-D-erythritol kinase (280 aa).

The active site involves Lys-8. 91–101 lines the ATP pocket; it reads PVSAGLAGGST. Asp-133 is an active-site residue.

This sequence belongs to the GHMP kinase family. IspE subfamily.

It catalyses the reaction 4-CDP-2-C-methyl-D-erythritol + ATP = 4-CDP-2-C-methyl-D-erythritol 2-phosphate + ADP + H(+). The protein operates within isoprenoid biosynthesis; isopentenyl diphosphate biosynthesis via DXP pathway; isopentenyl diphosphate from 1-deoxy-D-xylulose 5-phosphate: step 3/6. Functionally, catalyzes the phosphorylation of the position 2 hydroxy group of 4-diphosphocytidyl-2C-methyl-D-erythritol. This Clostridium botulinum (strain Alaska E43 / Type E3) protein is 4-diphosphocytidyl-2-C-methyl-D-erythritol kinase.